A 427-amino-acid polypeptide reads, in one-letter code: Anhydro-N-acetylmuramic acid kinase (427 aa).

An ATP-binding site is contributed by 32–39 (GTSLDGMD).

This sequence belongs to the anhydro-N-acetylmuramic acid kinase family.

The catalysed reaction is 1,6-anhydro-N-acetyl-beta-muramate + ATP + H2O = N-acetyl-D-muramate 6-phosphate + ADP + H(+). It participates in amino-sugar metabolism; 1,6-anhydro-N-acetylmuramate degradation. Its pathway is cell wall biogenesis; peptidoglycan recycling. Functionally, catalyzes the specific phosphorylation of 1,6-anhydro-N-acetylmuramic acid (anhMurNAc) with the simultaneous cleavage of the 1,6-anhydro ring, generating MurNAc-6-P. Is required for the utilization of anhMurNAc either imported from the medium or derived from its own cell wall murein, and thus plays a role in cell wall recycling. The protein is Anhydro-N-acetylmuramic acid kinase of Psychrobacter cryohalolentis (strain ATCC BAA-1226 / DSM 17306 / VKM B-2378 / K5).